We begin with the raw amino-acid sequence, 77 residues long: Cell division topological specificity factor (77 aa).

The protein belongs to the MinE family.

In terms of biological role, prevents the cell division inhibition by proteins MinC and MinD at internal division sites while permitting inhibition at polar sites. This ensures cell division at the proper site by restricting the formation of a division septum at the midpoint of the long axis of the cell. In Helicobacter pylori (strain P12), this protein is Cell division topological specificity factor.